Consider the following 420-residue polypeptide: tRNA(Ile)-lysidine synthase (420 aa).

28 to 33 contributes to the ATP binding site; sequence SGGLDS.

It belongs to the tRNA(Ile)-lysidine synthase family.

Its subcellular location is the cytoplasm. The enzyme catalyses cytidine(34) in tRNA(Ile2) + L-lysine + ATP = lysidine(34) in tRNA(Ile2) + AMP + diphosphate + H(+). Functionally, ligates lysine onto the cytidine present at position 34 of the AUA codon-specific tRNA(Ile) that contains the anticodon CAU, in an ATP-dependent manner. Cytidine is converted to lysidine, thus changing the amino acid specificity of the tRNA from methionine to isoleucine. In Hydrogenovibrio crunogenus (strain DSM 25203 / XCL-2) (Thiomicrospira crunogena), this protein is tRNA(Ile)-lysidine synthase.